The chain runs to 461 residues: Tumor necrosis factor receptor superfamily member 1A (461 aa).

Residues 1–29 (MGLSTVPGLLLPLVLRALLVDVYPAGVHG) form the signal peptide. At 30–210 (LVLHPGDREK…RNDFQDTGTT (181 aa)) the chain is on the extracellular side. TNFR-Cys repeat units lie at residues 43–82 (LCPQGKYSHPQNRSICCTKCHKGTYLHNDCLGPGLDTDCR), 83–125 (ECDN…DTVC), 126–166 (GCRK…DTIC), and 167–195 (NCHSGFFLRDKECVSCVNCKNADCKNLCP). 7 disulfide bridges follow: cysteine 44-cysteine 58, cysteine 59-cysteine 72, cysteine 62-cysteine 81, cysteine 84-cysteine 99, cysteine 102-cysteine 117, cysteine 105-cysteine 125, and cysteine 127-cysteine 143. Residue asparagine 54 is glycosylated (N-linked (GlcNAc...) asparagine). Asparagine 86 carries N-linked (GlcNAc...) asparagine glycosylation. N-linked (GlcNAc...) asparagine glycans are attached at residues asparagine 145 and asparagine 151. 5 disulfide bridges follow: cysteine 146–cysteine 158, cysteine 149–cysteine 166, cysteine 168–cysteine 179, cysteine 182–cysteine 194, and cysteine 185–cysteine 190. The helical transmembrane segment at 211-233 (VLLPLVIFFGLCLAFFLFVGLAC) threads the bilayer. At 234 to 461 (RYQRWKPKLY…RLAPAPHLLR (228 aa)) the chain is on the cytoplasmic side. Residues 340-350 (LPKWGGSAHSA) form an N-SMase activation domain (NSD) region. The region spanning 362 to 447 (PATLYAVVDG…GCLEDIEEAL (86 aa)) is the Death domain.

Binding of TNF to the extracellular domain leads to homotrimerization. The aggregated death domains provide a novel molecular interface that interacts specifically with the death domain of TRADD. Various TRADD-interacting proteins such as TRAFS, RIPK1 and possibly FADD, are recruited to the complex by their association with TRADD. This complex activates at least two distinct signaling cascades, apoptosis and NF-kappa-B signaling. Interacts with BAG4, BABAM2, FEM1B, GRB2, SQSTM1 and TRPC4AP. Interacts with DAB2IP. Interacts directly with NOL3 (via CARD domain); inhibits TNF-signaling pathway. Interacts with SH3RF2, TRADD and RIPK1. SH3RF2 facilitates the recruitment of RIPK1 and TRADD to TNFRSF1A in a TNF-alpha-dependent process. Interacts with PGLYRP1; this interaction is important for cell death induction. Interacts (via death domain) with MADD (via death domain).

It localises to the cell membrane. The protein localises to the golgi apparatus membrane. Receptor for TNFSF2/TNF-alpha and homotrimeric TNFSF1/lymphotoxin-alpha. The adapter molecule FADD recruits caspase-8 to the activated receptor. The resulting death-inducing signaling complex (DISC) performs caspase-8 proteolytic activation which initiates the subsequent cascade of caspases (aspartate-specific cysteine proteases) mediating apoptosis. The chain is Tumor necrosis factor receptor superfamily member 1A (TNFRSF1A) from Sus scrofa (Pig).